Here is a 303-residue protein sequence, read N- to C-terminus: Acetyltransferase ataH (303 aa).

The signal sequence occupies residues 1–23; it reads MPTTAAFLRALYILTTLRGIGTS. 3 consecutive transmembrane segments (helical) span residues 42–62, 194–214, and 257–277; these read FLLH…MMTF, LVFA…GIML, and GYIW…FPLF.

Belongs to the wax synthase family.

The protein localises to the membrane. Its pathway is mycotoxin biosynthesis. In terms of biological role, acetyltransferase; part of the gene cluster that mediates the biosynthesis of acetylaranotin, a member of the epipolythiodioxopiperazine (ETP) class of toxins characterized by a disulfide-bridged cyclic dipeptide. The first step of acetylaranotin biosynthesis is performed by the NRPS ataP which produces diketopiperazine cyclo-L-Phe-L-Phe via the condensation of 2 phenylalanines (L-Phe). The ataC domain of ataTC then catalyzes the formation of bishydroxylation of cyclo-L-Phe-L-Phe. The glutathione S-transferase domain ataG in ataIMG further catalyzes the conjugation of two glutathiones to the bishydroxylated intermediate. Next, the dipeptidase ataJ removes the Glu residues. The following step is performed by the carbon sulfur lyase domain ataI of ataIMG which may convert the bis-cysteinyl adduct to yield an epidithiol intermediate. The ataT domain from ataTC then catalyzes the oxidation of the free dithiols, followed by a cyclization step catalyzed by the cytochrome P450 ataF. AtaF probably acts as an epoxidase to promote a dual epoxidation formation at C8 and C9 along with C8' and C9', followed by the spontaneous nucleophilic attack of the amide nitrogens N10 and N10' to yield an intermediate with the pyrrolidine partial structure. The final steps of acetylaranotin biosynthesis involve the acetylation and ring rearrangement of an epitetrathiodiketopiperazine intermediate to produce acetylaranotin. AtaH probably catalyzes the acetylation of epitetrathiodiketopiperazine to produce a diacetate and ataY is responsible for the formation of the dihydrooxepin moiety that converts the diacetate intermediate to acetylaranotin via acetylapoaranotin. Both enzymes could function independently in the absence of the other. The acetylaranotin bis-thiomethyltransferase ataS located outside of acetylaranotin gene cluster is the main thiomethyltransferase responsible for converting acetylaranotin and its related intermediates to their methylated forms. This Aspergillus terreus (strain NIH 2624 / FGSC A1156) protein is Acetyltransferase ataH.